Reading from the N-terminus, the 456-residue chain is Alcohol acyl transferase 1 allele GSc (456 aa).

Residues H165 and N386 each act as proton acceptor in the active site.

The protein belongs to the plant acyltransferase family. In terms of tissue distribution, expressed at very low levels in the skin of ripe fruit.

In terms of biological role, involved in the biosynthesis of volatile esters which confer ripe apple fruit flavor. Alcohol acyl transferase that can use a wide range of alcohols as substrate to produce esters. The polypeptide is Alcohol acyl transferase 1 allele GSc (Malus domestica (Apple)).